A 306-amino-acid chain; its full sequence is Acetyl-coenzyme A carboxylase carboxyl transferase subunit beta (306 aa).

In terms of domain architecture, CoA carboxyltransferase N-terminal spans 25–294; that stretch reads LWIKDPTSGE…AVNPSNPSPT (270 aa). Residues 286–306 form a disordered region; the sequence is VNPSNPSPTDSQPPLSKAEAA. Positions 287 to 299 are enriched in polar residues; the sequence is NPSNPSPTDSQPP.

The protein belongs to the AccD/PCCB family. In terms of assembly, acetyl-CoA carboxylase is a heterohexamer composed of biotin carboxyl carrier protein (AccB), biotin carboxylase (AccC) and two subunits each of ACCase subunit alpha (AccA) and ACCase subunit beta (AccD).

It is found in the cytoplasm. It catalyses the reaction N(6)-carboxybiotinyl-L-lysyl-[protein] + acetyl-CoA = N(6)-biotinyl-L-lysyl-[protein] + malonyl-CoA. The protein operates within lipid metabolism; malonyl-CoA biosynthesis; malonyl-CoA from acetyl-CoA: step 1/1. In terms of biological role, component of the acetyl coenzyme A carboxylase (ACC) complex. Biotin carboxylase (BC) catalyzes the carboxylation of biotin on its carrier protein (BCCP) and then the CO(2) group is transferred by the transcarboxylase to acetyl-CoA to form malonyl-CoA. This is Acetyl-coenzyme A carboxylase carboxyl transferase subunit beta from Bartonella quintana (strain Toulouse) (Rochalimaea quintana).